The following is a 94-amino-acid chain: MPIKPGEEVIFTVPIRKIKKIVPRWKRAPRAVKFVREFVARHAKAQEVIISTKVNEKIWERGIEKPPSRLRVKVKVEEEDRDGKKVRIAYVDLA.

This sequence belongs to the eukaryotic ribosomal protein eL31 family.

This Pyrococcus abyssi (strain GE5 / Orsay) protein is Large ribosomal subunit protein eL31 (rpl31e).